The sequence spans 688 residues: Elongation factor G (688 aa).

Residues 8–282 (DKFRNFGIMA…GVVDYLPSPL (275 aa)) enclose the tr-type G domain. Residues 17-24 (AHIDAGKT), 81-85 (DTPGH), and 135-138 (NKMD) each bind GTP.

This sequence belongs to the TRAFAC class translation factor GTPase superfamily. Classic translation factor GTPase family. EF-G/EF-2 subfamily.

Its subcellular location is the cytoplasm. Its function is as follows. Catalyzes the GTP-dependent ribosomal translocation step during translation elongation. During this step, the ribosome changes from the pre-translocational (PRE) to the post-translocational (POST) state as the newly formed A-site-bound peptidyl-tRNA and P-site-bound deacylated tRNA move to the P and E sites, respectively. Catalyzes the coordinated movement of the two tRNA molecules, the mRNA and conformational changes in the ribosome. In Clostridium beijerinckii (strain ATCC 51743 / NCIMB 8052) (Clostridium acetobutylicum), this protein is Elongation factor G.